A 195-amino-acid polypeptide reads, in one-letter code: Ubiquitin-conjugating enzyme E2 T (195 aa).

One can recognise a UBC core domain in the interval 2-152; the sequence is QRTSRLKREL…ARQWTEKHAR (151 aa). Residue Cys-86 is the Glycyl thioester intermediate of the active site. Residue Lys-91 forms a Glycyl lysine isopeptide (Lys-Gly) (interchain with G-Cter in ubiquitin) linkage. Residues 146–157 show a composition bias toward basic and acidic residues; the sequence is WTEKHARQKTDE. A disordered region spans residues 146-195; sequence WTEKHARQKTDEEGMPGSLPEVGGSEGPSAAQKRKAGQLSSGGKRFCPDV. Lys-180 participates in a covalent cross-link: Glycyl lysine isopeptide (Lys-Gly) (interchain with G-Cter in ubiquitin). A Glycyl lysine isopeptide (Lys-Gly) (interchain with G-Cter in SUMO2) cross-link involves residue Lys-189.

Belongs to the ubiquitin-conjugating enzyme family. In terms of assembly, interacts with FANCL and BRCA1. In terms of processing, auto-ubiquitinated. Effects of auto-monoubiquitination at Lys-91 and Lys-180 are unclear.

It is found in the nucleus. It catalyses the reaction S-ubiquitinyl-[E1 ubiquitin-activating enzyme]-L-cysteine + [E2 ubiquitin-conjugating enzyme]-L-cysteine = [E1 ubiquitin-activating enzyme]-L-cysteine + S-ubiquitinyl-[E2 ubiquitin-conjugating enzyme]-L-cysteine.. Its pathway is protein modification; protein ubiquitination. Accepts ubiquitin from the E1 complex and catalyzes its covalent attachment to other proteins. Catalyzes monoubiquitination. Involved in mitomycin-C (MMC)-induced DNA repair: acts as a specific E2 ubiquitin-conjugating enzyme for the Fanconi anemia complex by associating with E3 ubiquitin-protein ligase FANCL and catalyzing monoubiquitination of FANCD2, a key step in the DNA damage pathway. Also mediates monoubiquitination of FANCL and FANCI. May contribute to ubiquitination and degradation of BRCA1. In vitro able to promote polyubiquitination using all 7 ubiquitin Lys residues, but may prefer 'Lys-11'-, 'Lys-27'-, 'Lys-48'- and 'Lys-63'-linked polyubiquitination. This chain is Ubiquitin-conjugating enzyme E2 T (UBE2T), found in Bos taurus (Bovine).